We begin with the raw amino-acid sequence, 202 residues long: NADH-quinone oxidoreductase subunit C (202 aa).

This sequence belongs to the complex I 30 kDa subunit family. In terms of assembly, NDH-1 is composed of 14 different subunits. Subunits NuoB, C, D, E, F, and G constitute the peripheral sector of the complex.

It localises to the cell inner membrane. It catalyses the reaction a quinone + NADH + 5 H(+)(in) = a quinol + NAD(+) + 4 H(+)(out). Its function is as follows. NDH-1 shuttles electrons from NADH, via FMN and iron-sulfur (Fe-S) centers, to quinones in the respiratory chain. The immediate electron acceptor for the enzyme in this species is believed to be ubiquinone. Couples the redox reaction to proton translocation (for every two electrons transferred, four hydrogen ions are translocated across the cytoplasmic membrane), and thus conserves the redox energy in a proton gradient. The protein is NADH-quinone oxidoreductase subunit C of Bartonella henselae (strain ATCC 49882 / DSM 28221 / CCUG 30454 / Houston 1) (Rochalimaea henselae).